We begin with the raw amino-acid sequence, 2017 residues long: Protein cbp-1 (2017 aa).

Basic and acidic residues predominate over residues 1 to 13 (MDEPPSKKSRADS). Positions 1–182 (MDEPPSKKSR…PGMFQGDQQQ (182 aa)) are disordered. Composition is skewed to low complexity over residues 21-30 (ALSALESLEA) and 78-90 (QPGQ…PPQN). Residues 106-116 (NPSQTSNNSPR) are compositionally biased toward polar residues. Residues 141–151 (MMSPPSMGRVP) are compositionally biased toward low complexity. Positions 152-164 (GPSPGGPQPPGPG) are enriched in pro residues. Residues 165–182 (QPQMRPGQPGMFQGDQQQ) are compositionally biased toward low complexity. At R234 the chain carries Symmetric dimethylarginine; by PRMT5; in vitro. The tract at residues 307–398 (SNGQPIRGPN…PGSSMLATHQ (92 aa)) is disordered. Positions 340–379 (QAAAAQHAAQQQAAAQAQAQAAAQQQQQQQREQEAAAAAQ) are enriched in low complexity. Residues 399–505 (DPEKRKLIQQ…REDCPVCKPL (107 aa)) form a TAZ-type 1 zinc finger. 2 disordered regions span residues 558-593 (EGFN…DMPD) and 706-864 (GRSD…DTVF). Over residues 559–573 (GFNGNPFQNGPNRGG) the composition is skewed to low complexity. The KIX domain occupies 593–672 (DCTKEWHHQV…KIYKIQKELQ (80 aa)). A compositionally biased stretch (polar residues) spans 721-773 (PSQQNQPWGGAPNSNMHQQIPPNGQVPQVNNSSTFPSSGNSTPNIGASSTVSA). The segment covering 834–854 (KDTKDGVAESKPKEQQAKREP) has biased composition (basic and acidic residues). The region spanning 864–970 (FSQEDLIKFL…EMFVSEMDPV (107 aa)) is the Bromo domain. Interaction with histone regions lie at residues 902–948 (DYHE…YNRK) and 1224–1226 (YLD). The region spanning 1112–1492 (KYLASKLPHN…LAYSLHETDS (381 aa)) is the CBP/p300-type HAT domain. Acetyl-CoA is bound by residues 1225–1227 (LDS), 1237–1238 (RT), I1284, R1289, and W1293. Over residues 1349-1358 (NEEAQRKVKE) the composition is skewed to basic and acidic residues. A disordered region spans residues 1349 to 1401 (NEEAQRKVKEDDDDGEDADGGLGGGDSGKKKSSKNKKNNLKKNAKMNKKKAGS). A compositionally biased stretch (basic residues) spans 1378–1399 (KKSSKNKKNNLKKNAKMNKKKA). The ZZ-type zinc-finger motif lies at 1494-1540 (GMEYTCNKCSSPAVWHCQSCDDFDLCDGCKPTTQHPHEMEKIKSLIG). Residues C1499, C1502, C1510, C1513, C1519, C1522, H1528, and H1530 each coordinate Zn(2+). A TAZ-type 2 zinc finger spans residues 1550–1631 (GGTRYESIQR…ACTVPFCMNI (82 aa)). 2 disordered regions span residues 1656–1828 (GLQS…QPVR) and 1908–2017 (SQMS…AGGQ). Over residues 1667 to 1678 (TPSTVSNGTPSN) the composition is skewed to polar residues. Residues 1699-1708 (QVQMQQHQGS) are compositionally biased toward low complexity. A compositionally biased stretch (polar residues) spans 1748 to 1757 (PQMNANQSRY). Low complexity-rich tracts occupy residues 1793–1812 (MNPQ…QNPG) and 1908–1932 (SQMS…QAGA). A compositionally biased stretch (polar residues) spans 1943 to 1962 (QNNSQPRAPSGQFASMNPSM). Residues 1963 to 2017 (QQQYPQQQQGWPQQRQQNPGGMQQNANPYNQFQNRQNMMMMPQQQQPHPSNAGGQ) are compositionally biased toward low complexity.

In terms of assembly, interacts (via N-terminus domain and HAT domain) with prmt-5; the interaction results in methylation of cbp-1. Interacts (via HAT domain) with cep-1; cep-1 transcriptional activity may be inhibited by interaction with methylated cbp-1. Component of a complex that contains prmt-5 and cbp-1. In terms of processing, methylation by prmt-5 may repress the capacity of cbp-1 to enhance cep-1-dependent transcription of egl-1.

Its subcellular location is the nucleus. The enzyme catalyses L-lysyl-[protein] + acetyl-CoA = N(6)-acetyl-L-lysyl-[protein] + CoA + H(+). In terms of biological role, acetyltransferase enzyme. Acetylates histones, giving a specific tag for transcriptional activation. May prevent DNA damage-induced apoptosis by inhibiting cep-1-dependent transcription activation of the programmed cell death activator egl-1. In differentiated cells, negatively regulates localization of heterochromatin to the nuclear periphery. Plays a role in migration of gonadal distal tip cells, where it probably modulates expression of genes involved in integrin-mediated adhesion. This is Protein cbp-1 (cbp-1) from Caenorhabditis elegans.